We begin with the raw amino-acid sequence, 1068 residues long: Probable ATPase FE772_23070 (1068 aa).

217-224 (GGGGAGKT) contacts ATP.

Functionally, involved in defense against bacteriophages. When this probable 4 gene operon (bGSDM-FE772_23060-FE772_23065-FE772_23070) is inserted into E.coli it provides nearly 100-fold protection against phages T5 and T6 and about 8-fold against phage T4. The operon without bGSDM no longer protects against phage. Probably a nucleotide hydrolase, possibly of ATP. This is Probable ATPase FE772_23070 from Lysobacter enzymogenes.